A 93-amino-acid chain; its full sequence is Cobalt transport protein CbiN (93 aa).

2 helical membrane passes run 5–25 and 63–83; these read LMLLAMVVALVILPFFINHGG and LLFTLQGSLGAAVIFYILGYC.

Belongs to the CbiN family. As to quaternary structure, forms an energy-coupling factor (ECF) transporter complex composed of an ATP-binding protein (A component, CbiO), a transmembrane protein (T component, CbiQ) and 2 possible substrate-capture proteins (S components, CbiM and CbiN) of unknown stoichimetry.

Its subcellular location is the cell inner membrane. Its pathway is cofactor biosynthesis; adenosylcobalamin biosynthesis. Its function is as follows. Part of the energy-coupling factor (ECF) transporter complex CbiMNOQ involved in cobalt import. The protein is Cobalt transport protein CbiN of Salmonella newport (strain SL254).